A 146-amino-acid chain; its full sequence is Large ribosomal subunit protein uL15 (146 aa).

Residues 1–56 form a disordered region; the sequence is MSDIQLNTLKPAEGSKHAKRRVGRGIGSGLGKTAGRGHKGQKSRSGGFHKVGFEGG. The segment covering 24-34 has biased composition (gly residues); it reads RGIGSGLGKTA.

It belongs to the universal ribosomal protein uL15 family. In terms of assembly, part of the 50S ribosomal subunit.

In terms of biological role, binds to the 23S rRNA. This chain is Large ribosomal subunit protein uL15, found in Bordetella bronchiseptica (strain ATCC BAA-588 / NCTC 13252 / RB50) (Alcaligenes bronchisepticus).